A 285-amino-acid polypeptide reads, in one-letter code: Energy-coupling factor transporter ATP-binding protein EcfA3 (285 aa).

The ABC transporter domain occupies 6–242 (LKVEELNYNY…KEVIRKVNLR (237 aa)). 39–46 (GGNGVGKS) contacts ATP.

It belongs to the ABC transporter superfamily. Energy-coupling factor EcfA family. Forms a stable energy-coupling factor (ECF) transporter complex composed of 2 membrane-embedded substrate-binding proteins (S component), 2 ATP-binding proteins (A component) and 2 transmembrane proteins (T component).

Its subcellular location is the cell membrane. Its function is as follows. ATP-binding (A) component of a common energy-coupling factor (ECF) ABC-transporter complex. Unlike classic ABC transporters this ECF transporter provides the energy necessary to transport a number of different substrates. This chain is Energy-coupling factor transporter ATP-binding protein EcfA3, found in Clostridium perfringens (strain ATCC 13124 / DSM 756 / JCM 1290 / NCIMB 6125 / NCTC 8237 / Type A).